The chain runs to 83 residues: Hainantoxin-III 4 (83 aa).

An N-terminal signal peptide occupies residues M1–A21. Positions S22–R48 are excised as a propeptide. Cystine bridges form between C50/C65, C57/C70, and C64/C77. Residue L81 is modified to Leucine amide.

This sequence belongs to the neurotoxin 10 (Hwtx-1) family. 15 (Hntx-3) subfamily. Monomer. In terms of tissue distribution, expressed by the venom gland.

Its subcellular location is the secreted. In terms of biological role, selective antagonist of neuronal tetrodotoxin (TTX)-sensitive voltage-gated sodium channels (IC(50)=1270 nM on Nav1.1/SCN1A, 270 nM on Nav1.2/SCN2A, 491 nM on Nav1.3/SCN3A and 232 nM on Nav1.7/SCN9A). This toxin suppress Nav1.7 current amplitude without significantly altering the activation, inactivation, and repriming kinetics. Short extreme depolarizations partially activate the toxin-bound channel, indicating voltage-dependent inhibition of this toxin. This toxin increases the deactivation of the Nav1.7 current after extreme depolarizations. The toxin-Nav1.7 complex is gradually dissociated upon prolonged strong depolarizations in a voltage-dependent manner, and the unbound toxin rebinds to Nav1.7 after a long repolarization. Moreover, analysis of chimeric channels showed that the DIIS3-S4 linker is critical for toxin binding to Nav1.7. These data are consistent with this toxin interacting with Nav1.7 site 4 and trapping the domain II voltage sensor in the closed state. In Cyriopagopus hainanus (Chinese bird spider), this protein is Hainantoxin-III 4.